Reading from the N-terminus, the 854-residue chain is Envelope glycoprotein B (854 aa).

The signal sequence occupies residues 1-30 (MSKNWFPLLCASVLVVYVSIASSSTGTASG). Topologically, residues 31 to 723 (AVTPTSPTEN…EGVVGFIKNP (693 aa)) are virion surface. Asparagine 40, asparagine 48, and asparagine 60 each carry an N-linked (GlcNAc...) asparagine; by host glycan. Cystine bridges form between cysteine 69-cysteine 524, cysteine 86-cysteine 480, cysteine 160-cysteine 225, cysteine 317-cysteine 364, and cysteine 546-cysteine 583. Residues 127 to 133 (SYSFIRE) are involved in fusion and/or binding to host membrane. Asparagine 183 carries an N-linked (GlcNAc...) asparagine; by host glycan. The interval 212-219 (GSTWLYTT) is involved in fusion and/or binding to host membrane. 12 N-linked (GlcNAc...) asparagine; by host glycosylation sites follow: asparagine 256, asparagine 275, asparagine 314, asparagine 356, asparagine 378, asparagine 382, asparagine 390, asparagine 423, asparagine 426, asparagine 442, asparagine 558, and asparagine 595. Hydrophobic membrane proximal region regions lie at residues 669–721 (VEGK…GFIK) and 700–720 (VAIGAVGGAVASFVEGVVGFI). The chain crosses the membrane as a helical span at residues 724-744 (FGSFTVILFLLAVLGVIYLIY). Residues 745–854 (MRQKRAYEKP…YQKIQNEYEV (110 aa)) are Intravirion-facing.

Belongs to the herpesviridae glycoprotein B family. As to quaternary structure, homotrimer; disulfide-linked. Binds to heparan sulfate proteoglycans. Interacts with gH/gL heterodimer. In terms of processing, a proteolytic cleavage by host furin generates two subunits that remain linked by disulfide bonds.

The protein resides in the virion membrane. Its subcellular location is the host cell membrane. The protein localises to the host endosome membrane. It localises to the host Golgi apparatus membrane. In terms of biological role, envelope glycoprotein that forms spikes at the surface of virion envelope. Essential for the initial attachment to heparan sulfate moieties of the host cell surface proteoglycans. Involved in fusion of viral and cellular membranes leading to virus entry into the host cell. Following initial binding to its host receptors, membrane fusion is mediated by the fusion machinery composed at least of gB and the heterodimer gH/gL. May be involved in the fusion between the virion envelope and the outer nuclear membrane during virion egress. This chain is Envelope glycoprotein B, found in Macaca mulatta (Rhesus macaque).